We begin with the raw amino-acid sequence, 423 residues long: MFS-type transporter phiL (423 aa).

A run of 3 helical transmembrane segments spans residues 25–45 (IFCF…NSFI), 82–102 (IGLA…LGGV), and 111–131 (YIFV…IIFF). Asparagine 141 and asparagine 151 each carry an N-linked (GlcNAc...) asparagine glycan. Residues 166–185 (DHASGRNLPNAGSKKSNPRN) form a disordered region. A run of 4 helical transmembrane segments spans residues 203–223 (VIIF…SLSY), 238–258 (LSYI…GFVV), 298–318 (IAVP…WTMS), and 321–341 (LPPI…TAAY). Asparagine 352 carries N-linked (GlcNAc...) asparagine glycosylation. 2 helical membrane passes run 369 to 389 (LLGA…GMGW) and 390 to 410 (TFTA…FLLF).

This sequence belongs to the major facilitator superfamily. CAR1 family.

The protein localises to the membrane. MFS-type transporter; part of the gene cluster that mediates the biosynthesis of the antihypercholesterolemic agents phomoidrides which are dimeric anhydrides. This chain is MFS-type transporter phiL, found in Fungal sp. (strain ATCC 74256).